Consider the following 98-residue polypeptide: NADH-ubiquinone oxidoreductase chain 4L (98 aa).

3 helical membrane passes run Met-1–Val-21, Ser-29–Leu-49, and Ile-61–Val-81.

It belongs to the complex I subunit 4L family. Core subunit of respiratory chain NADH dehydrogenase (Complex I) which is composed of 45 different subunits.

Its subcellular location is the mitochondrion inner membrane. The enzyme catalyses a ubiquinone + NADH + 5 H(+)(in) = a ubiquinol + NAD(+) + 4 H(+)(out). In terms of biological role, core subunit of the mitochondrial membrane respiratory chain NADH dehydrogenase (Complex I) which catalyzes electron transfer from NADH through the respiratory chain, using ubiquinone as an electron acceptor. Part of the enzyme membrane arm which is embedded in the lipid bilayer and involved in proton translocation. The sequence is that of NADH-ubiquinone oxidoreductase chain 4L (MT-ND4L) from Lynx canadensis (Canada lynx).